A 264-amino-acid polypeptide reads, in one-letter code: uncharacterized protein (264 aa).

Residue 13–20 (TGSTSGIG) coordinates NADP(+). Ser-141 contributes to the substrate binding site. Tyr-154 serves as the catalytic Proton acceptor.

This sequence belongs to the short-chain dehydrogenases/reductases (SDR) family.

This is an uncharacterized protein from Bacillus subtilis (strain 168).